A 336-amino-acid chain; its full sequence is Inositol 2-dehydrogenase (336 aa).

The protein belongs to the Gfo/Idh/MocA family. As to quaternary structure, homotetramer.

The catalysed reaction is myo-inositol + NAD(+) = scyllo-inosose + NADH + H(+). Functionally, involved in the oxidation of myo-inositol (MI) to 2-keto-myo-inositol (2KMI or 2-inosose). This is Inositol 2-dehydrogenase from Pseudomonas savastanoi pv. phaseolicola (strain 1448A / Race 6) (Pseudomonas syringae pv. phaseolicola (strain 1448A / Race 6)).